A 227-amino-acid polypeptide reads, in one-letter code: UPF0688 protein C1orf174 homolog (227 aa).

2 disordered regions span residues 1-122 (MRKR…VSDL) and 207-227 (AKEEDEDDDDYVDGLANEGNI). The span at 47-63 (TEKESSKKLRKDEKGPV) shows a compositional bias: basic and acidic residues. 2 stretches are compositionally biased toward polar residues: residues 77–104 (AASNESSNVNDSQQSEKSITNTKDNGTR) and 113–122 (RLPSSPVSDL).

Belongs to the UPF0688 family.

Its subcellular location is the nucleus. This Xenopus tropicalis (Western clawed frog) protein is UPF0688 protein C1orf174 homolog.